The sequence spans 417 residues: Probable serine/threonine-protein kinase WNK9 (417 aa).

The interval 1-23 (MDLVEAEAEEQPPDEDGDEEGYV) is disordered. The region spanning 32-289 (IRYDEIVGSG…ATELLKSSFL (258 aa)) is the Protein kinase domain. ATP contacts are provided by residues 113-116 (TELF) and Lys163. Asp180 functions as the Proton acceptor in the catalytic mechanism.

Belongs to the protein kinase superfamily. Ser/Thr protein kinase family. WNK subfamily.

It carries out the reaction L-seryl-[protein] + ATP = O-phospho-L-seryl-[protein] + ADP + H(+). The enzyme catalyses L-threonyl-[protein] + ATP = O-phospho-L-threonyl-[protein] + ADP + H(+). This chain is Probable serine/threonine-protein kinase WNK9 (WNK9), found in Oryza sativa subsp. japonica (Rice).